The sequence spans 662 residues: Neurexin-2-beta (662 aa).

Positions M1 to G10 are enriched in gly residues. The tract at residues M1–P27 is disordered. The signal sequence occupies residues M1–G46. Over A47–T586 the chain is Extracellular. The 209-residue stretch at T87–S295 folds into the Laminin G-like domain. Positions 139 and 156 each coordinate Ca(2+). An N-linked (GlcNAc...) asparagine glycan is attached at N186. Residues I238 and N240 each contribute to the Ca(2+) site. S350 carries O-linked (Xyl...) (heparan sulfate) serine glycosylation. Disordered stretches follow at residues A408–T458, L476–A496, and L530–P557. Residues G587–M607 form a helical membrane-spanning segment. Residues Y608–V662 lie on the Cytoplasmic side of the membrane. Positions N629–V662 are disordered.

It belongs to the neurexin family. Interacts (via cytoplasmic C-terminal region) with CASK. Isoform Beta 4b binds alpha-dystroglycan and neuroligins NLGN1, NLGN2 and NLGN3. Interacts with CBLN1, CBLN2 and, less avidly, with CBLN4. Interacts with CLSTN3. In terms of processing, O-glycosylated; contains heparan sulfate. Heparan sulfate attachment is required for synapse development by mediating interactions with neuroligins. In terms of tissue distribution, brain (neuronal synapse).

It is found in the presynaptic cell membrane. In terms of biological role, neuronal cell surface protein that may be involved in cell recognition and cell adhesion. The sequence is that of Neurexin-2-beta (Nrxn2) from Rattus norvegicus (Rat).